The sequence spans 314 residues: Regulator of microtubule dynamics protein 1 (314 aa).

An N6-succinyllysine modification is found at Lys165. TPR repeat units follow at residues 168-204 (AICL…NPKD) and 222-258 (PWYQ…DPNF).

This sequence belongs to the RMDN family. As to quaternary structure, interacts with microtubules.

It localises to the cytoplasm. The protein resides in the cytoskeleton. Its subcellular location is the spindle. The protein localises to the spindle pole. In Pongo abelii (Sumatran orangutan), this protein is Regulator of microtubule dynamics protein 1 (RMDN1).